A 198-amino-acid polypeptide reads, in one-letter code: Ribosome maturation factor RimP (198 aa).

It belongs to the RimP family.

The protein localises to the cytoplasm. Required for maturation of 30S ribosomal subunits. This chain is Ribosome maturation factor RimP, found in Rhizobium etli (strain CIAT 652).